Here is a 692-residue protein sequence, read N- to C-terminus: Elongation factor G (692 aa).

The tr-type G domain maps to 8–282 (KDYRNIGIMA…AVVDYLPSPL (275 aa)). GTP is bound by residues 17–24 (AHIDAGKT), 81–85 (DTPGH), and 135–138 (NKMD).

This sequence belongs to the TRAFAC class translation factor GTPase superfamily. Classic translation factor GTPase family. EF-G/EF-2 subfamily.

The protein localises to the cytoplasm. Functionally, catalyzes the GTP-dependent ribosomal translocation step during translation elongation. During this step, the ribosome changes from the pre-translocational (PRE) to the post-translocational (POST) state as the newly formed A-site-bound peptidyl-tRNA and P-site-bound deacylated tRNA move to the P and E sites, respectively. Catalyzes the coordinated movement of the two tRNA molecules, the mRNA and conformational changes in the ribosome. The protein is Elongation factor G (fusA) of Mycoplasmopsis pulmonis (strain UAB CTIP) (Mycoplasma pulmonis).